A 125-amino-acid polypeptide reads, in one-letter code: Fluoride-specific ion channel FluC (125 aa).

Transmembrane regions (helical) follow at residues Met1 to Gly21, Phe34 to Phe54, Thr72 to Phe92, and Leu101 to Ile121. Positions 76 and 79 each coordinate Na(+).

The protein belongs to the fluoride channel Fluc/FEX (TC 1.A.43) family.

The protein localises to the cell inner membrane. The enzyme catalyses fluoride(in) = fluoride(out). Na(+) is not transported, but it plays an essential structural role and its presence is essential for fluoride channel function. Fluoride-specific ion channel. Important for reducing fluoride concentration in the cell, thus reducing its toxicity. The sequence is that of Fluoride-specific ion channel FluC from Acidithiobacillus ferrooxidans (strain ATCC 23270 / DSM 14882 / CIP 104768 / NCIMB 8455) (Ferrobacillus ferrooxidans (strain ATCC 23270)).